A 256-amino-acid polypeptide reads, in one-letter code: Ferritin-3, chloroplastic (256 aa).

Residues 1–54 (MALSCSKVLTFSLSSVVGGDDAKKKLSLCSSSSLSASVNGGGSRNMRVCAAASN) constitute a chloroplast transit peptide. Positions 55–87 (APAPLTGVIFEPFQELKKDYLAVPIAPNVSLSR) are extension peptide (EP). The region spanning 88 to 241 (QNYSDEAEAA…EYVTQLRLVG (154 aa)) is the Ferritin-like diiron domain. Glu-105, Glu-140, His-143, Glu-189, and Gln-223 together coordinate Fe cation.

The protein belongs to the ferritin family. In terms of assembly, oligomer of 24 subunits. There are two types of subunits: L (light) chain and H (heavy) chain. The major chain can be light or heavy, depending on the species and tissue type. The functional molecule forms a roughly spherical shell with a diameter of 12 nm and contains a central cavity into which the insoluble mineral iron core is deposited.

The protein resides in the plastid. Its subcellular location is the chloroplast. The enzyme catalyses 4 Fe(2+) + O2 + 4 H(+) = 4 Fe(3+) + 2 H2O. Stores iron in a soluble, non-toxic, readily available form. Important for iron homeostasis. Has ferroxidase activity. Iron is taken up in the ferrous form and deposited as ferric hydroxides after oxidation. The protein is Ferritin-3, chloroplastic of Vigna unguiculata (Cowpea).